The chain runs to 401 residues: Exodeoxyribonuclease 7 large subunit (401 aa).

It belongs to the XseA family. In terms of assembly, heterooligomer composed of large and small subunits.

It is found in the cytoplasm. It catalyses the reaction Exonucleolytic cleavage in either 5'- to 3'- or 3'- to 5'-direction to yield nucleoside 5'-phosphates.. Functionally, bidirectionally degrades single-stranded DNA into large acid-insoluble oligonucleotides, which are then degraded further into small acid-soluble oligonucleotides. This Clostridium botulinum (strain Langeland / NCTC 10281 / Type F) protein is Exodeoxyribonuclease 7 large subunit.